We begin with the raw amino-acid sequence, 280 residues long: Four and a half LIM domains protein 1 (280 aa).

S2 carries the N-acetylserine modification. N6-acetyllysine is present on K4. The C4-type zinc-finger motif lies at 7 to 31; it reads CHYCRDPLQGKKYVQKDGRHCCLKC. LIM zinc-binding domains lie at 40-92, 101-153, 162-212, and 221-276; these read CVEC…CNKC, CKGC…CVTC, CVKC…CVDC, and CAGC…CPDC. Residue K86 forms a Glycyl lysine isopeptide (Lys-Gly) (interchain with G-Cter in SUMO2) linkage.

It is found in the cytoplasm. Its function is as follows. May have an involvement in muscle development or hypertrophy. Isoform 2 binds to RBP-J and plays a negative regulatory role in the RBP-J-mediated transcription in mammalian systems. This is Four and a half LIM domains protein 1 (Fhl1) from Rattus norvegicus (Rat).